The chain runs to 209 residues: MIAIIDYGMGNIRSVEQALKYIGAAYIVTSDKEEIFRSDGVILPGVGAFPKAMDILEEKDLVRVLQEIGRSRKPLLGICLGMQLLFEKSEELQDCNGLSLLPGVIRKLKVPYKIPHMGWNELKKEGEIALWNGVEDGSFVYYVHSYYADCPNEIVYGISDYGVKVPGFVAKGNIYGAQFHPEKSGDIGMQILKNFKGVVETWKSSQLSI.

Positions Met-1 to Ser-205 constitute a Glutamine amidotransferase type-1 domain. Cys-79 (nucleophile) is an active-site residue. Residues His-180 and Glu-182 contribute to the active site.

As to quaternary structure, heterodimer of HisH and HisF.

The protein resides in the cytoplasm. The enzyme catalyses 5-[(5-phospho-1-deoxy-D-ribulos-1-ylimino)methylamino]-1-(5-phospho-beta-D-ribosyl)imidazole-4-carboxamide + L-glutamine = D-erythro-1-(imidazol-4-yl)glycerol 3-phosphate + 5-amino-1-(5-phospho-beta-D-ribosyl)imidazole-4-carboxamide + L-glutamate + H(+). The catalysed reaction is L-glutamine + H2O = L-glutamate + NH4(+). It participates in amino-acid biosynthesis; L-histidine biosynthesis; L-histidine from 5-phospho-alpha-D-ribose 1-diphosphate: step 5/9. Functionally, IGPS catalyzes the conversion of PRFAR and glutamine to IGP, AICAR and glutamate. The HisH subunit catalyzes the hydrolysis of glutamine to glutamate and ammonia as part of the synthesis of IGP and AICAR. The resulting ammonia molecule is channeled to the active site of HisF. The protein is Imidazole glycerol phosphate synthase subunit HisH of Bacillus thuringiensis (strain Al Hakam).